The primary structure comprises 642 residues: Threonine--tRNA ligase (642 aa).

A TGS domain is found at 1–61 (MPVITLPDGS…DTDSELSIIT (61 aa)). The tract at residues 243–534 (DHRKIGKQLD…LIEEYAGKFP (292 aa)) is catalytic. Residues Cys334, His385, and His511 each contribute to the Zn(2+) site.

This sequence belongs to the class-II aminoacyl-tRNA synthetase family. As to quaternary structure, homodimer. Requires Zn(2+) as cofactor.

It localises to the cytoplasm. The catalysed reaction is tRNA(Thr) + L-threonine + ATP = L-threonyl-tRNA(Thr) + AMP + diphosphate + H(+). Its function is as follows. Catalyzes the attachment of threonine to tRNA(Thr) in a two-step reaction: L-threonine is first activated by ATP to form Thr-AMP and then transferred to the acceptor end of tRNA(Thr). Also edits incorrectly charged L-seryl-tRNA(Thr). The chain is Threonine--tRNA ligase from Shewanella piezotolerans (strain WP3 / JCM 13877).